A 381-amino-acid polypeptide reads, in one-letter code: MKGSQASDDATGSLGPGRLQLPAMRVLVAPDCYGDSLSAVEAAAAIATGWTRSRPGDSFIVAPQSDGGPGFVEVLGSRLGETRRLRVCGPLNTVVNAAWVFDPGSATAYLECAQACGLGLLGGPPTPETALAAHSKGVGQLIAAALRAGAARIVVGLGGSACTDGGKGMIAELGGLDAARRQLADVEVIAASDVEYPLLGPWGTARVFAPQKGADMATVAVLEGRLAAWAIELDAAAGRGVSAEPGAGAAGGIGAGLLAVGGRYQSGAAIIAEHTHFADDLADAELIVTGEGRFDEQSLHGKVVGAIAAAARPLAIPVIVLAGQVSLDKSALRSAGIMAALSIAEYAGSVRLALADAANQLMGLASQVAARLGNSGPSGYR.

Belongs to the glycerate kinase type-1 family.

This is an uncharacterized protein from Mycobacterium tuberculosis (strain CDC 1551 / Oshkosh).